An 87-amino-acid polypeptide reads, in one-letter code: Small ribosomal subunit protein uS15 (87 aa).

Belongs to the universal ribosomal protein uS15 family. Part of the 30S ribosomal subunit. Forms a bridge to the 50S subunit in the 70S ribosome, contacting the 23S rRNA.

One of the primary rRNA binding proteins, it binds directly to 16S rRNA where it helps nucleate assembly of the platform of the 30S subunit by binding and bridging several RNA helices of the 16S rRNA. In terms of biological role, forms an intersubunit bridge (bridge B4) with the 23S rRNA of the 50S subunit in the ribosome. The chain is Small ribosomal subunit protein uS15 from Clostridium botulinum (strain Eklund 17B / Type B).